We begin with the raw amino-acid sequence, 176 residues long: Ribosome rescue factor SmrB (176 aa).

The 76-residue stretch at 98 to 173 (LDLHGLTQMQ…GTAAILLLVE (76 aa)) folds into the Smr domain.

The protein belongs to the SmrB family. As to quaternary structure, associates with collided ribosomes, but not with correctly translating polysomes.

Its function is as follows. Acts as a ribosome collision sensor. Detects stalled/collided disomes (pairs of ribosomes where the leading ribosome is stalled and a second ribosome has collided with it) and endonucleolytically cleaves mRNA at the 5' boundary of the stalled ribosome. Stalled/collided disomes form a new interface (primarily via the 30S subunits) that binds SmrB. Cleaved mRNA becomes available for tmRNA ligation, leading to ribosomal subunit dissociation and rescue of stalled ribosomes. The sequence is that of Ribosome rescue factor SmrB from Serratia proteamaculans (strain 568).